The following is a 453-amino-acid chain: MSFDLIIKNGTVILENEARVVDIAVKGGKIAAIGQDLGDAKEVMDASGLVVSPGMVDAHTHISEPGRSHWEGYETGTRAAAKGGITTMIEMPLNQLPATVDRASIELKFDAAKGKLTIDAAQLGGLVSYNIDRLHELDEVGVVGFKCFVATCGDRGIDNDFRDVNDWQFFKGAQKLGELGQPVLVHCENALICDALGEEAKREGRVTAHDYVASRPVFTEVEAIRRVLYLAKVAGCRLHVCHISSPEGVEEVTRARQEGQDVTCESCPHYFVLDTDQFEEIGTLAKCSPPIRDLENQKGMWEKLFNGEIDCLVSDHSPCPPEMKAGNIMEAWGGIAGLQNCMDVMFDEAVQKRGMSLPMFGKLMATNAADIFGLQQKGRIALGKDADFVFIQPNSSYVLTNDDLEYRHKVSPYVGRTIGARITKTILRGDVIYDIEQGFPVAPKGQFILKHQQ.

His59, His61, Lys146, His186, His242, and Asp315 together coordinate Zn(2+). Position 146 is an N6-carboxylysine (Lys146).

It belongs to the metallo-dependent hydrolases superfamily. Allantoinase family. In terms of assembly, homotetramer. It depends on Zn(2+) as a cofactor. In terms of processing, carboxylation allows a single lysine to coordinate two zinc ions.

The catalysed reaction is (S)-allantoin + H2O = allantoate + H(+). It functions in the pathway nitrogen metabolism; (S)-allantoin degradation; allantoate from (S)-allantoin: step 1/1. Functionally, catalyzes the conversion of allantoin (5-ureidohydantoin) to allantoic acid by hydrolytic cleavage of the five-member hydantoin ring. This chain is Allantoinase, found in Escherichia coli O139:H28 (strain E24377A / ETEC).